A 480-amino-acid polypeptide reads, in one-letter code: Glutamate--tRNA ligase (480 aa).

Positions 9–19 match the 'HIGH' region motif; sequence PSPTGNLHIGT. Residues 247-251 carry the 'KMSKS' region motif; sequence KLSKR. Lysine 250 is an ATP binding site.

The protein belongs to the class-I aminoacyl-tRNA synthetase family. Glutamate--tRNA ligase type 1 subfamily. Monomer.

Its subcellular location is the cytoplasm. The catalysed reaction is tRNA(Glu) + L-glutamate + ATP = L-glutamyl-tRNA(Glu) + AMP + diphosphate. Functionally, catalyzes the attachment of glutamate to tRNA(Glu) in a two-step reaction: glutamate is first activated by ATP to form Glu-AMP and then transferred to the acceptor end of tRNA(Glu). This Nostoc sp. (strain PCC 7120 / SAG 25.82 / UTEX 2576) protein is Glutamate--tRNA ligase.